A 251-amino-acid polypeptide reads, in one-letter code: tRNA1(Val) (adenine(37)-N6)-methyltransferase (251 aa).

This sequence belongs to the methyltransferase superfamily. tRNA (adenine-N(6)-)-methyltransferase family.

The protein localises to the cytoplasm. The enzyme catalyses adenosine(37) in tRNA1(Val) + S-adenosyl-L-methionine = N(6)-methyladenosine(37) in tRNA1(Val) + S-adenosyl-L-homocysteine + H(+). Specifically methylates the adenine in position 37 of tRNA(1)(Val) (anticodon cmo5UAC). The chain is tRNA1(Val) (adenine(37)-N6)-methyltransferase from Shewanella frigidimarina (strain NCIMB 400).